Here is a 1299-residue protein sequence, read N- to C-terminus: Tubulin polyglutamylase TTLL5 (1299 aa).

In terms of domain architecture, TTL spans 62–407 (RYHLSYKIVR…VCQDPAQRAS (346 aa)). Residues Lys180, 186–187 (RG), 208–211 (SRYI), and 221–223 (KFD) each bind ATP. Arg186 is an a protein binding site. Arg247 is an L-glutamate binding site. Residue 268–269 (TN) coordinates ATP. L-glutamate contacts are provided by Tyr270, Ser271, and Lys293. Mg(2+) contacts are provided by Asp353, Glu366, and Asn368. The interval 378-488 (PLDLKIKASM…RGGFIRIFPT (111 aa)) is c-MTBD region. Lys384 is a binding site for L-glutamate. Disordered stretches follow at residues 589-626 (EMNVKTETESEEEEEVALDNEEEEQEASQEESAGFLRE), 832-853 (GTHSKSSKNNNSYSDSGAKGDH), 918-941 (SSVTTSDLSPGPGHHSSLSQIPSA), 1088-1130 (RSSA…RSLQ), and 1217-1275 (SSAT…QLNG). Over residues 597–617 (ESEEEEEVALDNEEEEQEASQ) the composition is skewed to acidic residues. Residues 838-847 (SKNNNSYSDS) show a composition bias toward low complexity. 3 stretches are compositionally biased toward polar residues: residues 1104 to 1130 (SGPTWSTQSDPQAPENHSSPPGSRSLQ), 1217 to 1230 (SSATASGQKPTTLP), and 1258 to 1275 (ATSQRASKGSSAEGQLNG).

The protein belongs to the tubulin--tyrosine ligase family. In terms of assembly, interacts with the transcriptional coactivators NCOA1/SRC-1 and NCOA2/TIF2. Mg(2+) is required as a cofactor.

It localises to the cell projection. Its subcellular location is the cilium. It is found in the cytoplasm. The protein resides in the cytoskeleton. The protein localises to the cilium basal body. It localises to the nucleus. The catalysed reaction is L-glutamyl-[protein] + L-glutamate + ATP = gamma-L-glutamyl-L-glutamyl-[protein] + ADP + phosphate + H(+). It carries out the reaction (L-glutamyl)(n)-gamma-L-glutamyl-L-glutamyl-[protein] + L-glutamate + ATP = (L-glutamyl)(n+1)-gamma-L-glutamyl-L-glutamyl-[protein] + ADP + phosphate + H(+). Its function is as follows. Polyglutamylase which modifies tubulin, generating polyglutamate side chains on the gamma-carboxyl group of specific glutamate residues within the C-terminal tail of tubulin. Preferentially mediates ATP-dependent initiation step of the polyglutamylation reaction over the elongation step. Preferentially modifies the alpha-tubulin tail over a beta-tail. Required for CCSAP localization to both polyglutamylated spindle and cilia microtubules. Increases the effects of transcriptional coactivator NCOA2/TIF2 in glucocorticoid receptor-mediated repression and induction and in androgen receptor-mediated induction. In Pongo abelii (Sumatran orangutan), this protein is Tubulin polyglutamylase TTLL5 (TTLL5).